Consider the following 102-residue polypeptide: Small ribosomal subunit protein bS18 (102 aa).

The protein belongs to the bacterial ribosomal protein bS18 family. In terms of assembly, part of the 30S ribosomal subunit. Forms a tight heterodimer with protein bS6.

Binds as a heterodimer with protein bS6 to the central domain of the 16S rRNA, where it helps stabilize the platform of the 30S subunit. This Orientia tsutsugamushi (strain Ikeda) (Rickettsia tsutsugamushi) protein is Small ribosomal subunit protein bS18.